Reading from the N-terminus, the 220-residue chain is Chaperone protein TorD (220 aa).

Belongs to the TorD/DmsD family. TorD subfamily.

Its subcellular location is the cytoplasm. Its function is as follows. Involved in the biogenesis of TorA. Acts on TorA before the insertion of the molybdenum cofactor and, as a result, probably favors a conformation of the apoenzyme that is competent for acquiring the cofactor. This chain is Chaperone protein TorD, found in Vibrio cholerae serotype O1 (strain M66-2).